The following is a 267-amino-acid chain: MKKITKISIQKKAGRYNIDLDNQFAFGVAESVLIKFGLAKGRELDDELIAEIKHNDSIAKALSIALNFLSHSLHTVKQVKQKMSEKEVSESIQDEVVAQLYEQKYIDDLNYAQHYVSTKKIISPKGPNVIKMDLKQAGVNDDDIETALSDYTHEEQIEIAEKLALKSATTYKRESTRAKKQKIVQALATKGFSFDIAEIVVDRVITENDDEIELENIKRQAEKSWRRYRNEVPSQRIYKTKNSLYTKGYNAELINVVIHELEVSADD.

Belongs to the RecX family.

Its subcellular location is the cytoplasm. In terms of biological role, modulates RecA activity. The sequence is that of Regulatory protein RecX from Leuconostoc mesenteroides subsp. mesenteroides (strain ATCC 8293 / DSM 20343 / BCRC 11652 / CCM 1803 / JCM 6124 / NCDO 523 / NBRC 100496 / NCIMB 8023 / NCTC 12954 / NRRL B-1118 / 37Y).